The sequence spans 142 residues: uncharacterized protein (142 aa).

The protein resides in the mitochondrion. This is an uncharacterized protein from Mus musculus (Mouse).